The chain runs to 90 residues: VLTDDDKNHVRAIWGHVSNNPEAFGAEALYRLFTAHPASKTYFSHFDLHENSAQIRXXXXKVVDALTQAVNNLDDLSGAISKLSDLHAEK.

Residues 1 to 90 (VLTDDDKNHV…SKLSDLHAEK (90 aa)) enclose the Globin domain.

The protein belongs to the globin family. Heterotetramer of two alpha chains and two beta chains. In terms of tissue distribution, red blood cells.

Its function is as follows. Involved in oxygen transport from the lung to the various peripheral tissues. In Saara hardwickii (Indian spiny-tailed lizard), this protein is Hemoglobin subunit alpha-1.